A 251-amino-acid polypeptide reads, in one-letter code: Capsid protein (251 aa).

A Bipartite nuclear localization signal motif is present at residues 3 to 20; that stretch reads KRDAPWRLTAGTAKISRT. The Nuclear localization signal motif lies at 35 to 49; the sequence is RASAWVNRPMYRKPR. A zinc finger lies at 63–80; it reads CEGPCKVQSFEQRHDVSH. A Nuclear export signal motif is present at residues 96–117; it reads ITHRVGKRFCVKSVYILGKIWM. The short motif at 195-242 is the Bipartite nuclear localization signal element; sequence RRFWKVNNHVVYNHQEAGKYENHTENALLLYMACTHASNPVYATLKIR.

It belongs to the geminiviridae capsid protein family. Homomultimer. Binds to single-stranded and double-stranded viral DNA. Interacts (via nuclear localization signals) with host importin alpha-1a.

It is found in the virion. Its subcellular location is the host nucleus. Encapsidates the viral DNA into characteristic twinned ('geminate') particles. Binds the genomic viral ssDNA and shuttles it into and out of the cell nucleus. The CP of bipartite geminiviruses is not required for cell-to-cell or systemic movement. This is Capsid protein from Capsicum annuum (Capsicum pepper).